A 233-amino-acid polypeptide reads, in one-letter code: MPIFRLPREPAFPDPALAEPDGLLAVGGDLEPERLLTAYAEGIFPWFDAESPILWWSPDPRLVLDPAALHVPRSLQRTLRRGAYRVSADEAFERVIRRCAERDRPGQQGTWITGEMVDAYVRLHRLGVAHSFEAWEGDALAGGLYGVSLGAAFFGESMFADAPDASKVAFVRSVEWLRSAGVELVDCQVRTEHLVRFGAREIPRAEFLARLARALEQPTLRGRWQLGGAGPPS.

It belongs to the L/F-transferase family.

The protein resides in the cytoplasm. The catalysed reaction is N-terminal L-lysyl-[protein] + L-leucyl-tRNA(Leu) = N-terminal L-leucyl-L-lysyl-[protein] + tRNA(Leu) + H(+). It carries out the reaction N-terminal L-arginyl-[protein] + L-leucyl-tRNA(Leu) = N-terminal L-leucyl-L-arginyl-[protein] + tRNA(Leu) + H(+). It catalyses the reaction L-phenylalanyl-tRNA(Phe) + an N-terminal L-alpha-aminoacyl-[protein] = an N-terminal L-phenylalanyl-L-alpha-aminoacyl-[protein] + tRNA(Phe). Functions in the N-end rule pathway of protein degradation where it conjugates Leu, Phe and, less efficiently, Met from aminoacyl-tRNAs to the N-termini of proteins containing an N-terminal arginine or lysine. This Anaeromyxobacter dehalogenans (strain 2CP-1 / ATCC BAA-258) protein is Leucyl/phenylalanyl-tRNA--protein transferase.